Consider the following 285-residue polypeptide: Probable endonuclease 4 (285 aa).

Zn(2+)-binding residues include H69, H109, E145, D179, H182, H216, D229, H231, and E261.

It belongs to the AP endonuclease 2 family. The cofactor is Zn(2+).

The enzyme catalyses Endonucleolytic cleavage to 5'-phosphooligonucleotide end-products.. In terms of biological role, endonuclease IV plays a role in DNA repair. It cleaves phosphodiester bonds at apurinic or apyrimidinic (AP) sites, generating a 3'-hydroxyl group and a 5'-terminal sugar phosphate. The sequence is that of Probable endonuclease 4 from Salmonella arizonae (strain ATCC BAA-731 / CDC346-86 / RSK2980).